A 366-amino-acid polypeptide reads, in one-letter code: Autoinducer 2-binding periplasmic protein LuxP (366 aa).

Residues Met1–Ala13 form the signal peptide.

This sequence belongs to the bacterial solute-binding protein 2 family.

It localises to the periplasm. Its function is as follows. Binds to an autoinducer molecule. This complex then interacts with the LuxQ sensor protein. The chain is Autoinducer 2-binding periplasmic protein LuxP (luxP) from Vibrio vulnificus (strain CMCP6).